The primary structure comprises 1321 residues: Adhesion G protein-coupled receptor A3 (1321 aa).

The first 33 residues, 1 to 33 (MEPPGRRRGRAQPPLLLPLSLLALLALLGGGGG), serve as a signal peptide directing secretion. Residues 34-761 (GGAAALPAGC…YTQAASLLHP (728 aa)) lie on the Extracellular side of the membrane. 2 N-linked (GlcNAc...) asparagine glycosylation sites follow: Asn-81 and Asn-98. 4 LRR repeats span residues 82-103 (RTVT…SFSG), 106-127 (LLER…AFWG), 130-151 (SLKR…IFRG), and 154-175 (NLVR…TFDY). N-linked (GlcNAc...) asparagine glycosylation is found at Asn-159, Asn-206, Asn-301, Asn-332, Asn-433, Asn-453, and Asn-592. Positions 187–237 (EYLLCDCNILWMHRWVKEKNITVRDTRCVYPKSLQAQPVTGVKQELLTCDP) constitute an LRRCT domain. The Ig-like domain occupies 242–340 (PSFYMTPSHR…GNNTRTVDIV (99 aa)). Cys-264 and Cys-324 are joined by a disulfide. The GAIN-B domain maps to 583 to 750 (LDKQLSFKCN…AVLMDLTGSE (168 aa)). Residues 594 to 620 (SNTFSSLALKNTIVEASIQLPPSLFSP) form an LRR 5 repeat. N-linked (GlcNAc...) asparagine glycans are attached at residues Asn-652, Asn-687, and Asn-728. The interval 701 to 750 (AARWDFDLLNGQGGWKSDGCHILYSDENITTIQCYSLSNYAVLMDLTGSE) is GPS. Cys-720 and Cys-734 are oxidised to a cystine. The helical transmembrane segment at 762 to 782 (VVYTTAIILLLCLLAVIVSYI) threads the bilayer. Residues 783 to 796 (YHHSLIRISLKSWH) lie on the Cytoplasmic side of the membrane. Residues 797 to 817 (MLVNLCFHIFLTCVVFVGGIT) traverse the membrane as a helical segment. Topologically, residues 818 to 826 (QTRNASICQ) are extracellular. N-linked (GlcNAc...) asparagine glycosylation is present at Asn-821. A helical membrane pass occupies residues 827-847 (AVGIILHYSTLATVLWVGVTA). Residues 848 to 876 (RNIYKQVTKKAKRCQDPDEPPPPPRPMLR) lie on the Cytoplasmic side of the membrane. Residues 877–897 (FYLIGGGIPIIVCGITAAANI) traverse the membrane as a helical segment. The Extracellular portion of the chain corresponds to 898-919 (KNYGSRPNAPYCWMAWEPSLGA). A helical transmembrane segment spans residues 920 to 940 (FYGPASFITFVNCMYFLSIFI). The Cytoplasmic segment spans residues 941 to 996 (QLKRHPERKYELKEPTEEQQRLAANENGEINHQDSMSLSLISTSALENEHTFHSQL). Residues 997–1017 (LGASLTLLLYVALWMFGALAV) form a helical membrane-spanning segment. Residues 1018-1024 (SLYYPLD) lie on the Extracellular side of the membrane. The helical transmembrane segment at 1025–1045 (LVFSFVFGATSLSFSAFFVVH) threads the bilayer. Residues 1046 to 1321 (HCVNREDVRL…TGLWKHETTV (276 aa)) are Cytoplasmic-facing. Residues 1073–1083 (NVQPPNSNGTN) show a composition bias toward polar residues. 4 disordered regions span residues 1073–1094 (NVQP…NSSA), 1198–1219 (VEGS…GHSR), 1231–1265 (QYNP…KKDA), and 1294–1321 (SNGQ…ETTV). Positions 1233 to 1250 (NPPQQDSSDACSTLPKSS) are enriched in polar residues. A PDZ-binding motif is present at residues 1319-1321 (TTV).

Belongs to the G-protein coupled receptor 2 family. Adhesion G-protein coupled receptor (ADGR) subfamily. As to quaternary structure, interacts (via PDZ-binding motif) with DLG1.

The protein localises to the membrane. In terms of biological role, orphan receptor that may have a role in planar cell polarity pathway. The polypeptide is Adhesion G protein-coupled receptor A3 (Homo sapiens (Human)).